A 301-amino-acid chain; its full sequence is Uricase (301 aa).

Residues K11 and T58 each act as charge relay system in the active site. Residues T58, D59, F160, R177, V228, Q229, and N255 each contribute to the urate site. H257 serves as the catalytic Charge relay system. Residues 299 to 301 (AKL) carry the Microbody targeting signal motif.

It belongs to the uricase family.

It is found in the peroxisome. The catalysed reaction is urate + O2 + H2O = 5-hydroxyisourate + H2O2. It functions in the pathway purine metabolism; urate degradation; (S)-allantoin from urate: step 1/3. Functionally, catalyzes the oxidation of uric acid to 5-hydroxyisourate, which is further processed to form (S)-allantoin. This chain is Uricase (uaZ), found in Emericella nidulans (strain FGSC A4 / ATCC 38163 / CBS 112.46 / NRRL 194 / M139) (Aspergillus nidulans).